A 68-amino-acid polypeptide reads, in one-letter code: DNA-directed RNA polymerase subunit omega (68 aa).

The protein belongs to the RNA polymerase subunit omega family. In terms of assembly, the RNAP catalytic core consists of 2 alpha, 1 beta, 1 beta' and 1 omega subunit. When a sigma factor is associated with the core the holoenzyme is formed, which can initiate transcription.

The catalysed reaction is RNA(n) + a ribonucleoside 5'-triphosphate = RNA(n+1) + diphosphate. Its function is as follows. Promotes RNA polymerase assembly. Latches the N- and C-terminal regions of the beta' subunit thereby facilitating its interaction with the beta and alpha subunits. This is DNA-directed RNA polymerase subunit omega from Desulforapulum autotrophicum (strain ATCC 43914 / DSM 3382 / VKM B-1955 / HRM2) (Desulfobacterium autotrophicum).